We begin with the raw amino-acid sequence, 330 residues long: Src kinase-associated phosphoprotein 2-B (330 aa).

A disordered region spans residues 57–84 (DKAEDDDQEENDGFPLPPDAVSLASDRD). Positions 59 to 68 (AEDDDQEEND) are enriched in acidic residues. One can recognise a PH domain in the interval 105–208 (EYLKAGYLEK…WINAIMNSRG (104 aa)). The disordered stretch occupies residues 236 to 261 (ELPEESEKPVTETETQKATPVPVNNT). Residues 240–250 (ESEKPVTETET) are compositionally biased toward basic and acidic residues. A compositionally biased stretch (polar residues) spans 251 to 261 (QKATPVPVNNT). One can recognise an SH3 domain in the interval 268 to 329 (DYANFYRGLW…PKAYIIEMYD (62 aa)).

It belongs to the SKAP family. Phosphorylated on tyrosines.

The protein resides in the cytoplasm. In terms of biological role, may be involved in B-cell and macrophage adhesion processes. May play a role in src signaling pathway. The polypeptide is Src kinase-associated phosphoprotein 2-B (skap2-b) (Xenopus laevis (African clawed frog)).